A 277-amino-acid polypeptide reads, in one-letter code: Undecaprenyl-diphosphatase (277 aa).

Transmembrane regions (helical) follow at residues 3 to 23, 44 to 64, 82 to 102, 109 to 129, 188 to 208, 218 to 238, and 249 to 269; these read IALL…EFLP, AKVF…LVYW, QFAL…LLFG, LFTP…ILWA, ATDF…VYSL, ADVP…WLCI, and SFIP…ATAW.

This sequence belongs to the UppP family.

It is found in the cell inner membrane. It catalyses the reaction di-trans,octa-cis-undecaprenyl diphosphate + H2O = di-trans,octa-cis-undecaprenyl phosphate + phosphate + H(+). Functionally, catalyzes the dephosphorylation of undecaprenyl diphosphate (UPP). Confers resistance to bacitracin. This chain is Undecaprenyl-diphosphatase, found in Polaromonas sp. (strain JS666 / ATCC BAA-500).